A 494-amino-acid polypeptide reads, in one-letter code: Hydroxyneurosporene desaturase (494 aa).

The protein belongs to the carotenoid/retinoid oxidoreductase family.

It carries out the reaction rhodopin + A = (3E)-3,4-didehydrorhodopin + AH2. Its pathway is carotenoid biosynthesis; spheroidene biosynthesis. Its function is as follows. Catalyzes the introduction of C-3,4 double bonds into 1-hydroxyneurosporene (1-HO-Neu) to yield demethylspheroidene (DMS). This Rhodobacter capsulatus (strain ATCC BAA-309 / NBRC 16581 / SB1003) protein is Hydroxyneurosporene desaturase (crtD).